The primary structure comprises 463 residues: L-seryl-tRNA(Sec) selenium transferase (463 aa).

Lysine 295 is modified (N6-(pyridoxal phosphate)lysine).

Belongs to the SelA family. Homodecamer; pentamer of dimers. Binds only one seryl-tRNA(Sec) per dimer. It depends on pyridoxal 5'-phosphate as a cofactor.

The protein localises to the cytoplasm. It carries out the reaction L-seryl-tRNA(Sec) + selenophosphate + H(+) = L-selenocysteinyl-tRNA(Sec) + phosphate. It participates in aminoacyl-tRNA biosynthesis; selenocysteinyl-tRNA(Sec) biosynthesis; selenocysteinyl-tRNA(Sec) from L-seryl-tRNA(Sec) (bacterial route): step 1/1. Its function is as follows. Converts seryl-tRNA(Sec) to selenocysteinyl-tRNA(Sec) required for selenoprotein biosynthesis. The protein is L-seryl-tRNA(Sec) selenium transferase of Escherichia coli O81 (strain ED1a).